The primary structure comprises 127 residues: Large ribosomal subunit protein bL12 (127 aa).

It belongs to the bacterial ribosomal protein bL12 family. Homodimer. Part of the ribosomal stalk of the 50S ribosomal subunit. Forms a multimeric L10(L12)X complex, where L10 forms an elongated spine to which 2 to 4 L12 dimers bind in a sequential fashion. Binds GTP-bound translation factors.

Its function is as follows. Forms part of the ribosomal stalk which helps the ribosome interact with GTP-bound translation factors. Is thus essential for accurate translation. The sequence is that of Large ribosomal subunit protein bL12 from Rhizobium etli (strain CIAT 652).